The primary structure comprises 57 residues: UPF0391 membrane protein RHECIAT_CH0003936 (57 aa).

The next 2 membrane-spanning stretches (helical) occupy residues 4 to 24 and 33 to 53; these read WALIFFVISIIAGFFGFSGVS and VLFGIALVIFLIFLVLALMAG.

It belongs to the UPF0391 family.

Its subcellular location is the cell membrane. In Rhizobium etli (strain CIAT 652), this protein is UPF0391 membrane protein RHECIAT_CH0003936.